We begin with the raw amino-acid sequence, 328 residues long: Ketol-acid reductoisomerase (NADP(+)) (328 aa).

In terms of domain architecture, KARI N-terminal Rossmann spans 2-181 (AKIYRETDAD…GFTRVGVIET (180 aa)). NADP(+)-binding positions include 25 to 28 (YGIQ), R48, S52, and 82 to 85 (DMVQ). H107 is a catalytic residue. Position 133 (G133) interacts with NADP(+). In terms of domain architecture, KARI C-terminal knotted spans 182–327 (TFAEETETDL…EDLRRLMRSG (146 aa)). Mg(2+) is bound by residues D190, E194, E226, and E230. Substrate is bound at residue S251.

Belongs to the ketol-acid reductoisomerase family. It depends on Mg(2+) as a cofactor.

The catalysed reaction is (2R)-2,3-dihydroxy-3-methylbutanoate + NADP(+) = (2S)-2-acetolactate + NADPH + H(+). It carries out the reaction (2R,3R)-2,3-dihydroxy-3-methylpentanoate + NADP(+) = (S)-2-ethyl-2-hydroxy-3-oxobutanoate + NADPH + H(+). It participates in amino-acid biosynthesis; L-isoleucine biosynthesis; L-isoleucine from 2-oxobutanoate: step 2/4. Its pathway is amino-acid biosynthesis; L-valine biosynthesis; L-valine from pyruvate: step 2/4. In terms of biological role, involved in the biosynthesis of branched-chain amino acids (BCAA). Catalyzes an alkyl-migration followed by a ketol-acid reduction of (S)-2-acetolactate (S2AL) to yield (R)-2,3-dihydroxy-isovalerate. In the isomerase reaction, S2AL is rearranged via a Mg-dependent methyl migration to produce 3-hydroxy-3-methyl-2-ketobutyrate (HMKB). In the reductase reaction, this 2-ketoacid undergoes a metal-dependent reduction by NADPH to yield (R)-2,3-dihydroxy-isovalerate. The protein is Ketol-acid reductoisomerase (NADP(+)) of Caldivirga maquilingensis (strain ATCC 700844 / DSM 13496 / JCM 10307 / IC-167).